Reading from the N-terminus, the 649-residue chain is tRNA-guanine(15) transglycosylase (649 aa).

Residue D88 is the Nucleophile of the active site. Substrate contacts are provided by D123 and A194. Zn(2+)-binding residues include C280, C282, and C285. The PUA domain maps to 573 to 648 (KYRIVIDSSV…VAVTLRGGLK (76 aa)).

Belongs to the archaeosine tRNA-ribosyltransferase family. Requires Zn(2+) as cofactor.

The enzyme catalyses guanosine(15) in tRNA + 7-cyano-7-deazaguanine = 7-cyano-7-carbaguanosine(15) in tRNA + guanine. Its pathway is tRNA modification; archaeosine-tRNA biosynthesis. Functionally, exchanges the guanine residue with 7-cyano-7-deazaguanine (preQ0) at position 15 in the dihydrouridine loop (D-loop) of archaeal tRNAs. The chain is tRNA-guanine(15) transglycosylase from Methanococcus maripaludis (strain C7 / ATCC BAA-1331).